The following is a 65-amino-acid chain: Metallothionein-like protein type 3 (65 aa).

It belongs to the metallothionein superfamily. Type 15 family.

In terms of biological role, metallothioneins have a high content of cysteine residues that bind various heavy metals. This is Metallothionein-like protein type 3 from Carica papaya (Papaya).